The primary structure comprises 176 residues: Caltractin (176 aa).

The disordered stretch occupies residues 1-27; that stretch reads MNRAAIAAGKPSGSISTGKPRRKTRAE. EF-hand domains lie at 31–66, 67–102, 104–139, and 140–175; these read EMKH…LGFD, VKKE…KISN, DPTE…LSEN, and ISDE…TSAF. Positions 44, 46, 48, 50, and 55 each coordinate Ca(2+). The Ca(2+) site is built by aspartate 153, aspartate 155, aspartate 157, glutamate 159, and aspartate 164.

Belongs to the centrin family. Monomer.

The protein resides in the cytoplasm. It is found in the cytoskeleton. Its subcellular location is the microtubule organizing center. It localises to the centrosome. Its function is as follows. Plays a fundamental role in microtubule-organizing center structure and function. This Giardia intestinalis (Giardia lamblia) protein is Caltractin (CAL).